Reading from the N-terminus, the 286-residue chain is Bifunctional protein FolD (286 aa).

Residues G166–S168 and I232 contribute to the NADP(+) site.

Belongs to the tetrahydrofolate dehydrogenase/cyclohydrolase family. In terms of assembly, homodimer.

The catalysed reaction is (6R)-5,10-methylene-5,6,7,8-tetrahydrofolate + NADP(+) = (6R)-5,10-methenyltetrahydrofolate + NADPH. It catalyses the reaction (6R)-5,10-methenyltetrahydrofolate + H2O = (6R)-10-formyltetrahydrofolate + H(+). It participates in one-carbon metabolism; tetrahydrofolate interconversion. Functionally, catalyzes the oxidation of 5,10-methylenetetrahydrofolate to 5,10-methenyltetrahydrofolate and then the hydrolysis of 5,10-methenyltetrahydrofolate to 10-formyltetrahydrofolate. The chain is Bifunctional protein FolD from Vibrio parahaemolyticus serotype O3:K6 (strain RIMD 2210633).